The primary structure comprises 293 residues: 4-diphosphocytidyl-2-C-methyl-D-erythritol kinase (293 aa).

The active site involves Lys-11. An ATP-binding site is contributed by 96 to 106; the sequence is PVAAGLGGGSS. The active site involves Asp-138.

Belongs to the GHMP kinase family. IspE subfamily.

It catalyses the reaction 4-CDP-2-C-methyl-D-erythritol + ATP = 4-CDP-2-C-methyl-D-erythritol 2-phosphate + ADP + H(+). It participates in isoprenoid biosynthesis; isopentenyl diphosphate biosynthesis via DXP pathway; isopentenyl diphosphate from 1-deoxy-D-xylulose 5-phosphate: step 3/6. Its function is as follows. Catalyzes the phosphorylation of the position 2 hydroxy group of 4-diphosphocytidyl-2C-methyl-D-erythritol. The polypeptide is 4-diphosphocytidyl-2-C-methyl-D-erythritol kinase (Xanthobacter autotrophicus (strain ATCC BAA-1158 / Py2)).